The sequence spans 548 residues: Membrane protein insertase YidC (548 aa).

The next 5 membrane-spanning stretches (helical) occupy residues 6–26, 349–369, 424–444, 455–475, and 503–523; these read NLILIGLLFVSFLLWQQWESD, TVFQGFVHNWGVAIIMLTLLV, LGGCLPILVQMPIFIALYWAL, FALWITDLSVKDPFFVLPILM, and PIIFTFMFLWFPAGLTLYWLV.

It belongs to the OXA1/ALB3/YidC family. Type 1 subfamily. As to quaternary structure, interacts with the Sec translocase complex via SecD. Specifically interacts with transmembrane segments of nascent integral membrane proteins during membrane integration.

It is found in the cell inner membrane. Its function is as follows. Required for the insertion and/or proper folding and/or complex formation of integral membrane proteins into the membrane. Involved in integration of membrane proteins that insert both dependently and independently of the Sec translocase complex, as well as at least some lipoproteins. Aids folding of multispanning membrane proteins. This is Membrane protein insertase YidC from Aeromonas salmonicida (strain A449).